A 482-amino-acid chain; its full sequence is Sugar transporter ERD6-like 16 (482 aa).

A run of 12 helical transmembrane segments spans residues 42 to 62, 80 to 100, 117 to 137, 142 to 162, 173 to 193, 197 to 217, 280 to 300, 316 to 336, 344 to 364, 382 to 402, 413 to 433, and 443 to 463; these read LMVL…GSCV, LAEF…GAVM, SACF…ALLL, FFTG…IAEI, TLNQ…GSLI, TLAL…CFIP, VIIG…GIGF, LGTI…TILI, LIMI…TSFL, GVLI…WVIM, IAGS…SYTF, and GTFY…AKMV.

This sequence belongs to the major facilitator superfamily. Sugar transporter (TC 2.A.1.1) family.

It localises to the membrane. Its function is as follows. Sugar transporter. This chain is Sugar transporter ERD6-like 16, found in Arabidopsis thaliana (Mouse-ear cress).